The sequence spans 261 residues: Carnitinyl-CoA dehydratase (261 aa).

Glu111 functions as the Nucleophile in the catalytic mechanism. Residue Glu131 is the Proton acceptor of the active site.

The protein belongs to the enoyl-CoA hydratase/isomerase family.

It carries out the reaction (R)-carnitinyl-CoA = crotonobetainyl-CoA + H2O. The protein operates within amine and polyamine metabolism; carnitine metabolism. In terms of biological role, catalyzes the reversible dehydration of L-carnitinyl-CoA to crotonobetainyl-CoA. This Salmonella typhi protein is Carnitinyl-CoA dehydratase.